We begin with the raw amino-acid sequence, 1155 residues long: MIKRVHLGQGKAEEILDLPNLIEIQLNSYEKFLQLDRLKNNKPLLNEGLESVFRDVFPMKSSNGEVALEYEKYYVEYDSLSFTEKECKRKGQSYEAVLKIRLNLQFLTTGEIRQKDVYMGTIPLMTDRGTFIVNGAERVIVSQIHRSPGVVFYKEKDLYYARIIPYRGSWLEFEIDSKKDYLYVKIDRKKRILVTLFLRALGLDTREKIIETFYKIKKIEVNEDTKREITGQYLAVNITIKENMTYRAGDKITLQDIEDFLQNGVKEIDLIDFDGYDSVPGKHFISSDVILNCFEKEDAYFSLKDGFKELSRESVMLAVYSVLLPGEPISIDNAENDLRTVFFSEKRYDLGHVGRYKLSKKFGLNDLTTSVLTMTDIVNTISHLLRIYDGHDVLDDIDHLGNRRVRSVGELLTNIYKGAMSRVEKIAKDRMSNKEVFNLKPQELISVKPIVSAVKEFFATSQLSQFMDQVNPLAELTHKRRLNALGPGGLSRDRAGFEVRDVHYTHYGRMCPIETPEGPNIGLIVSLATYAKVNDYGFLETPYRKVINGKVTDEIEYLSAIDEEKKCIAQANAAVNAESNYIDDLISVRVSGDYTTMIPKNIDYMDVSPRQLISVSSALIPFLEHNDANRALMGSNMQRQAVPLLFPQPPIVGTGMERIVAKDSGVVIKAKRSGTVVLATSKRIVIRPDNADDEHDLDEYELAKYERTNQDTSFNHSVLIKEGQVVNKGEIIADGPATRYGELALGNNLLVGFIPWNGFNYEDAILISERIVKEDLYTSIHIKEFSIEVRETKLGPEKVTADIPNVSGKILNKLDENGIVRIGTYVKPGDILIGKVTPKSEGDITPEFKLLTSIFGEKAKDVKNNSLKVPHGTEGTVIDVQRITKNDVGNLPPGVDEILKVYVAKKRRLKEGDKMAGRHGNKGVVAKILPVEDMPYLADGTPLDICLNPLGVPSRMNIGQLMESQLGLAGKYLSEYYDVPVFESATNECIQEKLKKAGFNETSKAILYDGYTGEPFENEVMVGIIYMLKLHHLVDDKMHARSTGPYSLVSQQPLGGKAQFGGQRLGEMEVWALEAYGAAYTLQELLTVKSDDMSGRVKIYENIVKGIPTNVSGIPESFNVLMQELRGLGFDLSIYDDNGNQIPLTEKEEELINKT.

It belongs to the RNA polymerase beta chain family. In terms of assembly, the RNAP catalytic core consists of 2 alpha, 1 beta, 1 beta' and 1 omega subunit. When a sigma factor is associated with the core the holoenzyme is formed, which can initiate transcription.

The catalysed reaction is RNA(n) + a ribonucleoside 5'-triphosphate = RNA(n+1) + diphosphate. Functionally, DNA-dependent RNA polymerase catalyzes the transcription of DNA into RNA using the four ribonucleoside triphosphates as substrates. This chain is DNA-directed RNA polymerase subunit beta, found in Borrelia turicatae (strain 91E135).